A 160-amino-acid chain; its full sequence is MKLQVLPLSQEAFSAYGDVIETQQRDFFHINNGLVERYHDLALVEILEQDRTLISINRAQPANLPLTLHELERHPLGTQAFIPMKGEVFVVVVALGDDKPDLSTLRAFITNGEQGVNYHRNVWHHPLFAWQRVTDFLTIDRGGSDNCDVESIPEQELCFA.

Belongs to the ureidoglycolate lyase family. In terms of assembly, homodimer. The cofactor is Ni(2+).

The catalysed reaction is (S)-ureidoglycolate = urea + glyoxylate. It functions in the pathway nitrogen metabolism; (S)-allantoin degradation. Functionally, catalyzes the catabolism of the allantoin degradation intermediate (S)-ureidoglycolate, generating urea and glyoxylate. Involved in the anaerobic utilization of allantoin as sole nitrogen source. Reinforces the induction of genes involved in the degradation of allantoin and glyoxylate by producing glyoxylate. The protein is Ureidoglycolate lyase of Escherichia coli (strain SMS-3-5 / SECEC).